A 485-amino-acid chain; its full sequence is Phosphoglucosamine mutase (485 aa).

Residue serine 133 is the Phosphoserine intermediate of the active site. Mg(2+)-binding residues include serine 133, aspartate 274, aspartate 276, and aspartate 278. Residue serine 133 is modified to Phosphoserine.

Belongs to the phosphohexose mutase family. The cofactor is Mg(2+). Post-translationally, activated by phosphorylation.

The enzyme catalyses alpha-D-glucosamine 1-phosphate = D-glucosamine 6-phosphate. Catalyzes the conversion of glucosamine-6-phosphate to glucosamine-1-phosphate. The polypeptide is Phosphoglucosamine mutase (Rippkaea orientalis (strain PCC 8801 / RF-1) (Cyanothece sp. (strain PCC 8801))).